The following is a 323-amino-acid chain: Glucokinase (323 aa).

8-13 is an ATP binding site; the sequence is GDVGGT.

The protein belongs to the bacterial glucokinase family.

The protein localises to the cytoplasm. The catalysed reaction is D-glucose + ATP = D-glucose 6-phosphate + ADP + H(+). In Yersinia pseudotuberculosis serotype I (strain IP32953), this protein is Glucokinase.